Here is a 126-residue protein sequence, read N- to C-terminus: Small ribosomal subunit protein uS13c (126 aa).

The interval 97-126 (PLRGQRTRTNARTRRGGKKTVAGKKKAPRK) is disordered. The segment covering 101–126 (QRTRTNARTRRGGKKTVAGKKKAPRK) has biased composition (basic residues).

The protein belongs to the universal ribosomal protein uS13 family. Part of the 30S ribosomal subunit.

It localises to the plastid. It is found in the chloroplast. Located at the top of the head of the 30S subunit, it contacts several helices of the 16S rRNA. This chain is Small ribosomal subunit protein uS13c, found in Porphyra purpurea (Red seaweed).